The primary structure comprises 4545 residues: Prolow-density lipoprotein receptor-related protein 1 (4545 aa).

Positions 1–19 are cleaved as a signal peptide; the sequence is MLTPPLLLLLPLLSALVSG. The Extracellular segment spans residues 20–4424; it reads ATMDAPKTCS…SQQQPGHMAS (4405 aa). 2 consecutive LDL-receptor class A domains span residues 26-67 and 71-111; these read KTCS…ICPQ and QRCP…HCRE. Cystine bridges form between Cys28-Cys41, Cys35-Cys54, Cys48-Cys65, Cys73-Cys86, Cys80-Cys99, and Cys93-Cys109. The EGF-like 1 domain maps to 112 to 150; sequence LRANCSRMGCQHHCVPTPSGPTCYCNSSFQLQADGKTCK. Residue Asn115 is glycosylated (N-linked (GlcNAc...) asparagine). Disulfide bonds link Cys116–Cys125, Cys121–Cys134, Cys136–Cys149, Cys155–Cys165, Cys161–Cys174, and Cys176–Cys189. A glycan (N-linked (GlcNAc...) asparagine) is linked at Asn137. In terms of domain architecture, EGF-like 2; calcium-binding spans 151–190; the sequence is DFDECSVYGTCSQLCTNTDGSFTCGCVEGYLLQPDNRSCK. N-linked (GlcNAc...) asparagine glycans are attached at residues Asn186, Asn240, and Asn275. 3 LDL-receptor class B repeats span residues 293–335, 336–379, and 380–423; these read GNFY…DPAM, GKVF…DLVS, and RLVY…FENY. The N-linked (GlcNAc...) asparagine glycan is linked to Asn358. N-linked (GlcNAc...) asparagine glycosylation occurs at Asn447. Residues 475-521 form the EGF-like 3 domain; the sequence is RSHACENDQYGKPGGCSDICLLANSHKARTCRCRSGFSLGSDGKSCK. 3 disulfides stabilise this stretch: Cys479-Cys494, Cys490-Cys505, and Cys507-Cys520. LDL-receptor class B repeat units lie at residues 572–614, 615–660, 661–711, and 712–755; these read GFIY…DWMG, DNLY…DPLN, GWMY…DIPA, and GRLY…HGNY. Residue Asn730 is glycosylated (N-linked (GlcNAc...) asparagine). An EGF-like 4 domain is found at 804–844; it reads GTNKCRVNNGGCSSLCLATPGSRQCACAEDQVLDTDGVTCL. Cystine bridges form between Cys808-Cys819, Cys815-Cys828, Cys830-Cys843, Cys855-Cys867, Cys862-Cys880, Cys874-Cys891, Cys896-Cys908, Cys903-Cys921, Cys915-Cys932, Cys937-Cys949, Cys944-Cys962, Cys956-Cys972, Cys977-Cys990, Cys985-Cys1003, Cys997-Cys1012, Cys1016-Cys1028, Cys1023-Cys1041, Cys1035-Cys1052, Cys1063-Cys1076, Cys1070-Cys1089, Cys1083-Cys1098, Cys1105-Cys1119, Cys1113-Cys1132, Cys1126-Cys1141, Cys1146-Cys1160, Cys1153-Cys1173, Cys1167-Cys1183, Cys1186-Cys1197, Cys1193-Cys1207, Cys1209-Cys1222, Cys1228-Cys1238, Cys1234-Cys1247, and Cys1249-Cys1262. LDL-receptor class A domains are found at residues 853-893, 894-934, 935-974, 975-1014, 1014-1054, 1061-1100, 1103-1143, and 1144-1183; these read PQCQ…LCHQ, HTCP…TCSA, RTCPPNQFSCASGRCIPISWTCDLDDDCGDRSDESASCAY, PTCFPLTQFTCNNGRCININWRCDNDNDCGDNSDEAGCSH, HSCS…NCTN, GGCHSDEFQCRLDGLCIPLRWRCDGDTDCMDSSDEKSCEG, HVCD…NCEA, and LACRPPSHPCANNTSVCLPPDKLCDGKDDCGDGSDEGELC. The Ca(2+) site is built by Trp872, Asp875, Asp877, Asp879, Asp885, and Glu886. Residue Asn929 is glycosylated (N-linked (GlcNAc...) asparagine). Ca(2+) is bound by residues Trp1033, Asp1036, Asp1038, Asp1040, Asp1046, and Glu1047. A glycan (N-linked (GlcNAc...) asparagine) is linked at Asn1051. Residues Trp1081, Asp1084, Asp1086, Asp1088, Asp1094, and Glu1095 each contribute to the Ca(2+) site. 2 N-linked (GlcNAc...) asparagine glycosylation sites follow: Asn1155 and Asn1156. 2 EGF-like domains span residues 1184–1223 and 1224–1263; these read DQCSLNNGGCSHNCSVAPGEGIVCSCPLGMELGSDNHTCQ and IQSYCAKHLKCSQKCDQNKFSVKCSCYEGWVLEPDGESCR. N-linked (GlcNAc...) asparagine glycans are attached at residues Asn1196 and Asn1219. 5 LDL-receptor class B repeats span residues 1310-1356, 1357-1399, 1400-1446, 1447-1491, and 1492-1532; these read SALY…DWIA, GNIY…DPRD, GILF…DYLE, KRIL…YGGE, and VYWT…YHPS. N-linked (GlcNAc...) asparagine glycosylation occurs at Asn1512. Residues 1537–1580 form the EGF-like 7 domain; sequence APNPCEANGGRGPCSHLCLINYNRTVSCACPHLMKLHKDNTTCY. Disulfide bonds link Cys1541/Cys1554, Cys1550/Cys1564, and Cys1566/Cys1579. N-linked (GlcNAc...) asparagine glycosylation is found at Asn1559, Asn1576, Asn1617, and Asn1646. 4 LDL-receptor class B repeats span residues 1628 to 1670, 1671 to 1714, 1715 to 1754, and 1755 to 1799; these read QRVY…DWVS, RNLF…HPLR, GKLYWTDGDNISMANMDGSNHTLLFSGQKGPVGLAIDFPE, and SKLY…MGDK. 4 N-linked (GlcNAc...) asparagine glycosylation sites follow: Asn1724, Asn1734, Asn1764, and Asn1826. Residues 1847–1888 enclose the EGF-like 8 domain; sequence GTNPCSVNNGDCSQLCLPTSETTRSCMCTAGYSLRSGQQACE. 3 cysteine pairs are disulfide-bonded: Cys1851/Cys1862, Cys1858/Cys1872, and Cys1874/Cys1887. Asn1934 carries an N-linked (GlcNAc...) asparagine glycan. LDL-receptor class B repeat units follow at residues 1935 to 1977, 1978 to 2020, 2021 to 2064, and 2065 to 2108; these read DTIY…DWIA, GNIY…HPEK, GYLF…DYQG, and GKLY…FEDF. N-linked (GlcNAc...) asparagine glycosylation is present at Asn1996. N6-acetyllysine is present on Lys2010. N-linked (GlcNAc...) asparagine glycosylation occurs at Asn2049. N-linked (GlcNAc...) asparagine glycans are attached at residues Asn2118 and Asn2128. The 41-residue stretch at 2156–2196 folds into the EGF-like 9 domain; it reads GTNVCAVANGGCQQLCLYRGGGQRACACAHGMLAEDGASCR. 3 disulfide bridges follow: Cys2160–Cys2171, Cys2167–Cys2181, and Cys2183–Cys2195. LDL-receptor class B repeat units lie at residues 2254–2295, 2296–2344, 2345–2389, 2390–2432, and 2433–2474; these read NRIF…HRGW, DTLY…DECQ, NLMF…DHRA, EKLY…YGEH, and IFWT…VAND. The N-linked (GlcNAc...) asparagine glycan is linked to Asn2473. An EGF-like 10 domain is found at 2479 to 2519; that stretch reads ELSPCRINNGGCQDLCLLTHQGHVNCSCRGGRILQEDFTCR. 3 disulfide bridges follow: Cys2483/Cys2494, Cys2490/Cys2504, and Cys2506/Cys2518. Residue Asn2503 is glycosylated (N-linked (GlcNAc...) asparagine). N-linked (GlcNAc...) asparagine glycosylation is present at Asn2522. LDL-receptor class A domains are found at residues 2523–2564, 2565–2603, 2604–2642, 2643–2691, 2695–2733, 2733–2772, and 2773–2815; these read SSCR…YCNS, RRCKKTFRQCNNGRCVSNMLWCNGVDDCGDGSDEIPCNK, TACGVGEFRCRDGSCIGNSSRCNQFVDCEDASDEMNCSA, TDCS…DCPG, PRCPLNYFACPSGRCIPMSWTCDKEDDCENGEDETHCNK, KFCSEAQFECQNHRCISKQWLCDGSDDCGDGSDEAAHCEG, and KTCG…GCLY. Disulfide bonds link Cys2525–Cys2538, Cys2533–Cys2551, Cys2545–Cys2562, Cys2567–Cys2579, Cys2574–Cys2592, and Cys2586–Cys2601. A glycan (N-linked (GlcNAc...) asparagine) is linked at Asn2602. Disulfide bonds link Cys2606–Cys2618, Cys2613–Cys2631, Cys2625–Cys2640, Cys2645–Cys2667, Cys2661–Cys2680, Cys2674–Cys2689, Cys2697–Cys2709, Cys2704–Cys2722, Cys2716–Cys2731, Cys2735–Cys2747, Cys2742–Cys2760, Cys2754–Cys2770, Cys2775–Cys2788, Cys2782–Cys2801, and Cys2795–Cys2813. N-linked (GlcNAc...) asparagine glycans are attached at residues Asn2621 and Asn2639. A glycan (N-linked (GlcNAc...) asparagine) is linked at Asn2816. 3 consecutive LDL-receptor class A domains span residues 2817–2856, 2857–2900, and 2903–2941; these read STCDDREFMCQNRLCIPKHFVCDHDRDCADGSDESPECEY, PTCG…HCTS, and HKCNASSQFLCSSGRCVAEALLCNGQDDCGDGSDERGCH. Disulfide bonds link Cys2819/Cys2831, Cys2826/Cys2844, Cys2838/Cys2854, Cys2859/Cys2871, Cys2866/Cys2885, Cys2879/Cys2898, Cys2905/Cys2918, Cys2913/Cys2931, Cys2925/Cys2940, Cys2945/Cys2957, Cys2953/Cys2966, Cys2968/Cys2981, Cys2987/Cys2997, Cys2993/Cys3006, and Cys3008/Cys3022. Asn2906 carries an N-linked (GlcNAc...) asparagine glycan. The EGF-like 11 domain occupies 2942-2982; that stretch reads VNECLSRKLSGCSQDCEDLKIGFKCRCRPGFRLKDDGRTCA. The 41-residue stretch at 2983-3023 folds into the EGF-like 12; calcium-binding domain; the sequence is DLDECSTTFPCSQLCINTHGSYKCLCVEGYAPRGGDPHSCK. Asn3049 and Asn3090 each carry an N-linked (GlcNAc...) asparagine glycan. LDL-receptor class B repeat units lie at residues 3070–3114, 3115–3157, 3158–3201, 3202–3244, and 3245–3285; these read QMIY…DWVG, GNLY…DVQN, GYLY…DYVT, ERIY…FEDY, and VYWT…FHAL. Asn3265 carries an N-linked (GlcNAc...) asparagine glycan. In terms of domain architecture, EGF-like 13 spans 3291-3332; the sequence is PNHPCKVNNGGCSNLCLLSPGGGHKCACPTNFYLGGDGRTCV. Cystine bridges form between Cys3295–Cys3306, Cys3302–Cys3316, and Cys3318–Cys3331. LDL-receptor class A domains are found at residues 3333–3372, 3373–3411, 3412–3451, 3452–3492, 3493–3534, 3535–3573, 3574–3612, 3612–3650, 3653–3693, 3694–3734, and 3740–3779; these read SNCTASQFVCKNDKCIPFWWKCDTEDDCGDHSDEPPDCPE, FKCRPGQFQCSTGICTNPAFICDGDNDCQDNSDEANCDI, HVCLPSQFKCTNTNRCIPGIFRCNGQDNCGDGEDERDCPE, VTCA…NCTQ, MTCG…ECDE, RTCEPYQFRCKNNRCVPGRWQCDYDNDCGDNSDEESCTP, RPCSESEFSCANGRCIAGRWKCDGDHDCADGSDEKDCTP, PRCDMDQFQCKSGHCIPLRWRCDADADCMDGSDEEACGT, RTCP…ECAR, FICP…DCEP, and PHCKDKKEFLCRNQRCLSSSLRCNMFDDCGDGSDEEDCSI. Asn3334 carries N-linked (GlcNAc...) asparagine glycosylation. Intrachain disulfides connect Cys3335–Cys3347, Cys3342–Cys3360, Cys3354–Cys3370, Cys3375–Cys3387, Cys3382–Cys3400, Cys3394–Cys3409, Cys3414–Cys3427, Cys3421–Cys3440, Cys3434–Cys3449, Cys3454–Cys3467, Cys3461–Cys3480, Cys3474–Cys3490, Cys3495–Cys3508, Cys3502–Cys3521, Cys3515–Cys3532, Cys3537–Cys3549, Cys3544–Cys3562, Cys3556–Cys3571, Cys3576–Cys3588, Cys3583–Cys3601, Cys3595–Cys3610, Cys3614–Cys3626, Cys3621–Cys3639, Cys3633–Cys3648, Cys3655–Cys3667, Cys3662–Cys3680, Cys3674–Cys3691, Cys3696–Cys3710, Cys3704–Cys3723, Cys3717–Cys3732, Cys3742–Cys3755, Cys3750–Cys3768, Cys3762–Cys3777, Cys3786–Cys3799, Cys3793–Cys3808, Cys3810–Cys3823, Cys3829–Cys3839, Cys3835–Cys3848, and Cys3850–Cys3861. Asn3489 is a glycosylation site (N-linked (GlcNAc...) asparagine). Asn3663 carries an N-linked (GlcNAc...) asparagine glycan. EGF-like domains lie at 3782-3824 and 3825-3862; these read KLTS…PGCQ and DINECLRFGTCSQLCNNTKGGHLCSCARNFMKTHNTCK. N-linked (GlcNAc...) asparagine glycosylation occurs at Asn3789. Asn3840 carries N-linked (GlcNAc...) asparagine glycosylation. LDL-receptor class B repeat units lie at residues 3913-3955, 3971-4013, 4014-4057, and 4058-4102; these read GRVY…HLNI, GNVY…DPLR, GTMY…DYHN, and ERLY…FEDY. The Recognition site for proteolytical processing motif lies at 3941–3944; that stretch reads RHRR. Residue Asn3954 is glycosylated (N-linked (GlcNAc...) asparagine). N-linked (GlcNAc...) asparagine glycans are attached at residues Asn4076 and Asn4126. EGF-like domains lie at 4148 to 4184, 4197 to 4233, 4233 to 4269, 4269 to 4305, 4305 to 4341, 4341 to 4376, and 4374 to 4410; these read VTNPCDRKKCEWLCLLSPSGPVCTCPNGKRLDNGTCV, RPGTCTLQCFNGGSCFLNARRQPKCRCQPRYTGDKCE, ELDQCWEYCHNGGTCAASPSGMPTCRCPTGFTGPKCT, TAQVCAGYCSNNSTCTVNQGNQPQCRCLPGFLGDRCQ, QYRQCSGFCENFGTCQMAADGSRQCRCTVYFEGPRCE, EVNKCSRCLQGACVVNKQTGDVTCNCTDGRVAPSCL, and SCLTCIDHCSNGGSCTMNSKMMPECQCPPHMTGPRCE. 17 disulfide bridges follow: Cys4152–Cys4161, Cys4157–Cys4170, Cys4172–Cys4183, Cys4201–Cys4211, Cys4205–Cys4221, Cys4223–Cys4232, Cys4237–Cys4247, Cys4241–Cys4257, Cys4259–Cys4268, Cys4273–Cys4283, Cys4277–Cys4293, Cys4295–Cys4304, Cys4309–Cys4319, Cys4313–Cys4329, Cys4331–Cys4340, Cys4345–Cys4353, and Cys4348–Cys4364. N-linked (GlcNAc...) asparagine glycosylation is present at Asn4180. Residues Asn4279 and Asn4280 are each glycosylated (N-linked (GlcNAc...) asparagine). Asn4365 is a glycosylation site (N-linked (GlcNAc...) asparagine). Disulfide bonds link Cys4366–Cys4375, Cys4378–Cys4388, Cys4382–Cys4398, and Cys4400–Cys4409. The chain crosses the membrane as a helical span at residues 4425–4445; sequence ILIPLLLLLLLLLVAGVVFWY. The Cytoplasmic portion of the chain corresponds to 4446-4545; the sequence is KRRVRGAKGF…PEDEIGDPLA (100 aa). Residues 4446 to 4545 are interaction with MAFB; it reads KRRVRGAKGF…PEDEIGDPLA (100 aa). The residue at position 4461 (Thr4461) is a Phosphothreonine. An NPXY motif motif is present at residues 4503–4508; the sequence is FTNPVY. The residue at position 4508 (Tyr4508) is a Phosphotyrosine. Phosphoserine is present on residues Ser4518, Ser4521, and Ser4524.

The protein belongs to the LDLR family. In terms of assembly, heterodimer of an 85-kDa membrane-bound carboxyl subunit and a non-covalently attached 515-kDa N-terminal subunit. Intracellular domain interacts with MAFB. Found in a complex with PID1/PCLI1, LRP1 and CUBNI. Interacts with SNX17, PID1/PCLI1, PDGF and CUBN. The intracellular domain interacts with SHC1, GULP1 and DAB1. Can weakly interact (via NPXY motif) with DAB2 (via PID domain); the interaction is enhanced by tyrosine phosphorylation of the NPXY motif. Interacts with MDK; promotes neuronal survival. Interacts with LRPAP1; this interaction is followed by rapid internalization. Interacts with uPA/PLAU and PAI1/SERPINE1, either individually or in complex with each other, leading to rapid endocytosis; this interaction is abolished in the presence of LRPAP1/RAP. Also interacts with tPA/PLAT alone or in complex with SERPINE1. Interacts with the urokinase receptor PLAUR; this interaction leads to PLAUR internalization and is impaired in the presence of SORL1. Interacts with PDGFB. Interacts with TAU/MAPT, leading to endocytosis; this interaction is reduced in the presence of LRPAP1/RAP. Interacts with IGFBP3. Interacts with ADGRG6. Post-translationally, phosphorylated on serine and threonine residues. In terms of processing, phosphorylated on tyrosine residues upon stimulation with PDGF. Tyrosine phosphorylation promotes interaction with SHC1. Cleaved into a 85 kDa membrane-spanning subunit (LRP-85) and a 515 kDa large extracellular domain (LRP-515) that remains non-covalently associated. Gamma-secretase-dependent cleavage of LRP-85 releases the intracellular domain from the membrane.

The protein localises to the cell membrane. It is found in the membrane. Its subcellular location is the coated pit. The protein resides in the golgi outpost. It localises to the cytoplasm. The protein localises to the cytoskeleton. It is found in the microtubule organizing center. Its subcellular location is the nucleus. Its function is as follows. Endocytic receptor involved in endocytosis and in phagocytosis of apoptotic cells. Required for early embryonic development. Involved in cellular lipid homeostasis. Involved in the plasma clearance of chylomicron remnants and activated LRPAP1 (alpha 2-macroglobulin), as well as the local metabolism of complexes between plasminogen activators and their endogenous inhibitors. Acts as an alpha-2-macroglobulin receptor. Acts as a TAU/MAPT receptor and controls the endocytosis of TAU/MAPT as well as its subsequent spread. May modulate cellular events, such as APP metabolism, kinase-dependent intracellular signaling, neuronal calcium signaling as well as neurotransmission. Also acts as a receptor for IGFBP3 to mediate cell growth inhibition. (Microbial infection) Functions as a receptor for Vibrio cholerae cholix toxin and for Pseudomonas aeruginosa exotoxin A. The protein is Prolow-density lipoprotein receptor-related protein 1 of Mus musculus (Mouse).